The following is a 726-amino-acid chain: Catalase-peroxidase (726 aa).

Residues 1–33 (MSTTDDTHNTLSTGKCPFHQGGHDRSAGAGTAS) form a disordered region. The segment at residues 105–226 (WHGAGTYRSI…LGATEMGLIY (122 aa)) is a cross-link (tryptophyl-tyrosyl-methioninium (Trp-Tyr) (with M-252)). The active-site Proton acceptor is His-106. Positions 226–252 (YVNPEGPDHSGEPLSAAAAIRATFGNM) form a cross-link, tryptophyl-tyrosyl-methioninium (Tyr-Met) (with W-105). His-267 lines the heme b pocket.

The protein belongs to the peroxidase family. Peroxidase/catalase subfamily. Homodimer or homotetramer. Heme b serves as cofactor. Formation of the three residue Trp-Tyr-Met cross-link is important for the catalase, but not the peroxidase activity of the enzyme.

The enzyme catalyses H2O2 + AH2 = A + 2 H2O. It catalyses the reaction 2 H2O2 = O2 + 2 H2O. Its function is as follows. Bifunctional enzyme with both catalase and broad-spectrum peroxidase activity. The sequence is that of Catalase-peroxidase from Salmonella paratyphi A (strain ATCC 9150 / SARB42).